The following is a 459-amino-acid chain: uncharacterized protein (459 aa).

The region spanning 7–65 (PVNKNEIYTLTFEDLTHEGNGVAKIEGYPLFVPEVLPDEQAKVKVVKVNKNFGFGKLLE) is the TRAM domain. Residues Cys-78, Cys-82, Cys-85, and Cys-164 each coordinate [4Fe-4S] cluster. Residues Gln-288, Tyr-317, Glu-338, and Asp-386 each coordinate S-adenosyl-L-methionine. Residue Cys-413 is the Nucleophile of the active site.

Belongs to the class I-like SAM-binding methyltransferase superfamily. RNA M5U methyltransferase family.

This is an uncharacterized protein from Oceanobacillus iheyensis (strain DSM 14371 / CIP 107618 / JCM 11309 / KCTC 3954 / HTE831).